The primary structure comprises 381 residues: uncharacterized protein (381 aa).

The tract at residues 176 to 292 (HAAGKIKKSK…EPMVDETPQN (117 aa)) is disordered. Basic residues predominate over residues 177 to 186 (AAGKIKKSKN). Residues 187–212 (QKKDGTLSRPLGKKENKSVVKVKIEE) show a composition bias toward basic and acidic residues. Acidic residues predominate over residues 276 to 286 (DEEDEDEEPMV).

This is an uncharacterized protein from Caenorhabditis elegans.